Reading from the N-terminus, the 94-residue chain is Core protein OPG142 (94 aa).

The protein belongs to the orthopoxvirus OPG142 family. As to quaternary structure, part of a complex composed of the kinase OPG054, OPG092, OPG100, OPG114, OPG115, OPG142 and OPG157.

It localises to the host cytoplasm. The protein localises to the virion. Its function is as follows. Late protein which is a part of a large complex required for early virion morphogenesis. This complex participates in the formation of virosomes and the incorporation of virosomal contents into nascent immature virions. Required for the stability and kinase activity of OPG054. This chain is Core protein OPG142 (OPG142), found in Cynomys gunnisoni (Gunnison's prairie dog).